The primary structure comprises 165 residues: Ubiquitin-like protein ISG15 (165 aa).

2 Ubiquitin-like domains span residues 2–78 and 79–157; these read GWDL…VDKC and DEPL…LRGG. At Cys78 the chain carries S-nitrosocysteine; alternate. The short motif at 152–157 is the LRLRGG element; sequence LRLRGG. Residues 153 to 157 form an involved in the ligation of specific target proteins region; sequence RLRGG. Gly157 is covalently cross-linked (Glycyl lysine isopeptide (Gly-Lys) (interchain with K-? in acceptor proteins)). Residues 158 to 165 constitute a propeptide, removed in mature form; it reads GTEPGGRS.

Homodimer; disulfide-linked. Interacts with, and is conjugated to its targets by UBE1L (E1 enzyme) and UBE2E2 (E2 enzyme). Interacts with NEDD4. Interacts with PARP12; this interaction inhibits PINK1/Parkin-dependent mitophagy. As to quaternary structure, (Microbial infection) Interacts with vaccinia virus protein E3. In terms of assembly, (Microbial infection) Interaction with influenza B NS1 protein inhibits its conjugation. (Microbial infection) Interacts (via C-terminus) with Crimean-Congo hemorrhagic fever virus (CCHFV) RNA-directed RNA polymerase L (via N-terminus); the deISGylase activity of the viral protein interferes with antiviral signaling pathways mediated by NF-kappaB and IRF signalings. As to quaternary structure, (Microbial infection) Interacts with human cytomegalovirus protein UL26; this interaction inhibits global protein ISGylation. Post-translationally, S-nitrosylation decreases its dimerization, thereby increasing the availability as well as the solubility of monomeric ISG15 for its conjugation to cellular proteins. Induced as an inactive, precursor protein that is cleaved by specific proteases to expose the C-terminal diglycine (LRLRGG) motif. This motif is essential not only for its conjugation to substrates but also for its recognition by the relevant processing proteases. As to expression, detected in lymphoid cells, striated and smooth muscle, several epithelia and neurons. Expressed in neutrophils, monocytes and lymphocytes. Enhanced expression seen in pancreatic adenocarcinoma, endometrial cancer, and bladder cancer, as compared to non-cancerous tissue. In bladder cancer, the increase in expression exhibits a striking positive correlation with more advanced stages of the disease.

The protein resides in the cytoplasm. It localises to the secreted. Functionally, ubiquitin-like protein which plays a key role in the innate immune response to viral infection either via its conjugation to a target protein (ISGylation) or via its action as a free or unconjugated protein. ISGylation involves a cascade of enzymatic reactions involving E1, E2, and E3 enzymes which catalyze the conjugation of ISG15 to a lysine residue in the target protein. Its target proteins include IFIT1, MX1/MxA, PPM1B, UBE2L6, UBA7, CHMP5, CHMP2A, CHMP4B and CHMP6. Isgylation of the viral sensor IFIH1/MDA5 promotes IFIH1/MDA5 oligomerization and triggers activation of innate immunity against a range of viruses, including coronaviruses, flaviviruses and picornaviruses. Can also isgylate: EIF2AK2/PKR which results in its activation, RIGI which inhibits its function in antiviral signaling response, EIF4E2 which enhances its cap structure-binding activity and translation-inhibition activity, UBE2N and UBE2E1 which negatively regulates their activity, IRF3 which inhibits its ubiquitination and degradation and FLNB which prevents its ability to interact with the upstream activators of the JNK cascade thereby inhibiting IFNA-induced JNK signaling. Exhibits antiviral activity towards both DNA and RNA viruses, including influenza A, HIV-1 and Ebola virus. Restricts HIV-1 and ebola virus via disruption of viral budding. Inhibits the ubiquitination of HIV-1 Gag and host TSG101 and disrupts their interaction, thereby preventing assembly and release of virions from infected cells. Inhibits Ebola virus budding mediated by the VP40 protein by disrupting ubiquitin ligase activity of NEDD4 and its ability to ubiquitinate VP40. ISGylates influenza A virus NS1 protein which causes a loss of function of the protein and the inhibition of virus replication. The secreted form of ISG15 can: induce natural killer cell proliferation, act as a chemotactic factor for neutrophils and act as a IFN-gamma-inducing cytokine playing an essential role in antimycobacterial immunity. The secreted form acts through the integrin ITGAL/ITGB2 receptor to initiate activation of SRC family tyrosine kinases including LYN, HCK and FGR which leads to secretion of IFNG and IL10; the interaction is mediated by ITGAL. In Homo sapiens (Human), this protein is Ubiquitin-like protein ISG15.